The sequence spans 200 residues: 3-isopropylmalate dehydratase small subunit (200 aa).

The protein belongs to the LeuD family. LeuD type 1 subfamily. As to quaternary structure, heterodimer of LeuC and LeuD.

It carries out the reaction (2R,3S)-3-isopropylmalate = (2S)-2-isopropylmalate. The protein operates within amino-acid biosynthesis; L-leucine biosynthesis; L-leucine from 3-methyl-2-oxobutanoate: step 2/4. In terms of biological role, catalyzes the isomerization between 2-isopropylmalate and 3-isopropylmalate, via the formation of 2-isopropylmaleate. This is 3-isopropylmalate dehydratase small subunit from Haemophilus influenzae (strain 86-028NP).